We begin with the raw amino-acid sequence, 248 residues long: Proteasome subunit alpha type-7 (248 aa).

Residue S130 is glycosylated (O-linked (GlcNAc) serine). The residue at position 153 (Y153) is a Phosphotyrosine.

This sequence belongs to the peptidase T1A family. As to quaternary structure, the 26S proteasome consists of a 20S proteasome core and two 19S regulatory subunits. The 20S proteasome core is a barrel-shaped complex made of 28 subunits that are arranged in four stacked rings. The two outer rings are each formed by seven alpha subunits, and the two inner rings are formed by seven beta subunits. The proteolytic activity is exerted by three beta-subunits PSMB5, PSMB6 and PSMB7. PSMA7 interacts directly with the PSMG1-PSMG2 heterodimer which promotes 20S proteasome assembly. Interacts with HIF1A. Interacts with RAB7A. Interacts with PRKN. Interacts with ABL1 and ABL2. Interacts with EMAP2. Interacts with MAVS.

Its subcellular location is the cytoplasm. The protein resides in the nucleus. In terms of biological role, component of the 20S core proteasome complex involved in the proteolytic degradation of most intracellular proteins. This complex plays numerous essential roles within the cell by associating with different regulatory particles. Associated with two 19S regulatory particles, forms the 26S proteasome and thus participates in the ATP-dependent degradation of ubiquitinated proteins. The 26S proteasome plays a key role in the maintenance of protein homeostasis by removing misfolded or damaged proteins that could impair cellular functions, and by removing proteins whose functions are no longer required. Associated with the PA200 or PA28, the 20S proteasome mediates ubiquitin-independent protein degradation. This type of proteolysis is required in several pathways including spermatogenesis (20S-PA200 complex) or generation of a subset of MHC class I-presented antigenic peptides (20S-PA28 complex). Inhibits the transactivation function of HIF-1A under both normoxic and hypoxia-mimicking conditions. The interaction with EMAP2 increases the proteasome-mediated HIF-1A degradation under the hypoxic conditions. Plays a role in hepatitis C virus internal ribosome entry site-mediated translation. Mediates nuclear translocation of the androgen receptor (AR) and thereby enhances androgen-mediated transactivation. Promotes MAVS degradation and thereby negatively regulates MAVS-mediated innate immune response. This chain is Proteasome subunit alpha type-7 (PSMA7), found in Pongo abelii (Sumatran orangutan).